A 343-amino-acid polypeptide reads, in one-letter code: MTQAHTATTVTTVSVDSLRQSARSHALPDDAAWRVDDVAALFALPFNDLLFRAQQVHREHFDANTVQLSTLLSIKTGGCEEDCGYCPQSAHHDAGVKAEKLMALDEVLDAARAAKANGATRFCMGAAWRSPKDRHLEPVMDMVREVKAMGLETCVTLGMLKAEQAQQLKEAGLDYYNHNLDTSPEFYGKIITTRTYQDRLDTIGHVRDAGINVCCGGIVGMGEAREARAGLIAQLANMDPYPESVPINNLVQVEGTPLAGTEALDPFEFVRTIAVARITMPRAMVRLSAGREAMDEALQALCFMAGANSIFYGEKLLTTGNPQADRDRALLARLDIRAEGYAG.

A Radical SAM core domain is found at 64-291; it reads NTVQLSTLLS…RAMVRLSAGR (228 aa). Positions 79, 83, and 86 each coordinate [4Fe-4S] cluster. [2Fe-2S] cluster is bound by residues Cys-123, Cys-154, Cys-214, and Arg-286.

The protein belongs to the radical SAM superfamily. Biotin synthase family. In terms of assembly, homodimer. Requires [4Fe-4S] cluster as cofactor. It depends on [2Fe-2S] cluster as a cofactor.

The catalysed reaction is (4R,5S)-dethiobiotin + (sulfur carrier)-SH + 2 reduced [2Fe-2S]-[ferredoxin] + 2 S-adenosyl-L-methionine = (sulfur carrier)-H + biotin + 2 5'-deoxyadenosine + 2 L-methionine + 2 oxidized [2Fe-2S]-[ferredoxin]. The protein operates within cofactor biosynthesis; biotin biosynthesis; biotin from 7,8-diaminononanoate: step 2/2. Functionally, catalyzes the conversion of dethiobiotin (DTB) to biotin by the insertion of a sulfur atom into dethiobiotin via a radical-based mechanism. In Cupriavidus necator (strain ATCC 17699 / DSM 428 / KCTC 22496 / NCIMB 10442 / H16 / Stanier 337) (Ralstonia eutropha), this protein is Biotin synthase.